The sequence spans 228 residues: tRNA (guanine-N(1)-)-methyltransferase (228 aa).

Residues glycine 111 and 130-135 (IGDFVL) contribute to the S-adenosyl-L-methionine site.

Belongs to the RNA methyltransferase TrmD family. As to quaternary structure, homodimer.

The protein localises to the cytoplasm. The catalysed reaction is guanosine(37) in tRNA + S-adenosyl-L-methionine = N(1)-methylguanosine(37) in tRNA + S-adenosyl-L-homocysteine + H(+). Functionally, specifically methylates guanosine-37 in various tRNAs. The polypeptide is tRNA (guanine-N(1)-)-methyltransferase (Ureaplasma parvum serovar 3 (strain ATCC 27815 / 27 / NCTC 11736)).